The sequence spans 276 residues: Aldo-keto reductase Mkms_1985 (276 aa).

Tyrosine 50 acts as the Proton donor in catalysis. NADPH-binding residues include leucine 190, isoleucine 228, lysine 230, serine 231, valine 232, arginine 236, serine 239, and asparagine 240. Residues 257–276 (SSLEDGSRLGPDPKTFNFTG) form a disordered region.

The protein belongs to the aldo/keto reductase family.

This Mycobacterium sp. (strain KMS) protein is Aldo-keto reductase Mkms_1985.